The sequence spans 1953 residues: TATA-binding protein-associated factor mot1 (1953 aa).

One copy of the HEAT 1 repeat lies at 36-74; that stretch reads PDELYNLLGRVVPYLKSKNWDTRVAAAKAIGGIVENVPV. The disordered stretch occupies residues 79-141; it reads RTSPVKKEET…KLEEERLSTR (63 aa). Residues 98–108 show a composition bias toward basic and acidic residues; the sequence is TEEKPFIKTEE. Over residues 113-130 the composition is skewed to low complexity; the sequence is SSQSQVVVSSNLTSNSEV. Basic and acidic residues predominate over residues 131 to 141; sequence SKLEEERLSTR. At serine 144 the chain carries Phosphoserine. Positions 240 to 278 are disordered; that stretch reads DNVGSNSKGSPTTSIPEHKTSINNNKPEDTPTPSENVHL. Polar residues predominate over residues 242-276; it reads VGSNSKGSPTTSIPEHKTSINNNKPEDTPTPSENV. 4 HEAT repeats span residues 358–396, 513–551, 554–592, and 608–646; these read VWPF…YAGF, SDYL…KLVQ, LSSC…LCSF, and EFSF…VQTS. Disordered regions lie at residues 730-762 and 1078-1103; these read SGQP…KDDP and DDND…KSSL. HEAT repeat units follow at residues 1191–1229 and 1270–1311; these read QSEI…SNAA and VRIL…LVPL. The Helicase ATP-binding domain maps to 1370–1543; it reads AFLNKYELHG…WSLFDFLMPG (174 aa). An ATP-binding site is contributed by 1383–1390; it reads DDMGLGKT. The short motif at 1494–1497 is the DEGH box element; that stretch reads DEGH. An HEAT 8 repeat occupies 1580-1623; the sequence is EAIHKQVLPFMLRRLKEDVLADLPPKIIQDYYCDMSDLQRKLLN. In terms of domain architecture, Helicase C-terminal spans 1725-1877; sequence GIDSALTNAV…STVVNQQNAG (153 aa). Residues 1901–1920 are disordered; sequence QNIDKEESEDAAGRGLSGTS.

It belongs to the SNF2/RAD54 helicase family. As to quaternary structure, forms a complex with TBP which binds TATA DNA.

Its subcellular location is the nucleus. Functionally, regulates transcription in association with TATA binding protein (TBP). Removes TBP from the TATA box via its ATPase activity. This Schizosaccharomyces pombe (strain 972 / ATCC 24843) (Fission yeast) protein is TATA-binding protein-associated factor mot1.